The following is a 352-amino-acid chain: Adenosine deaminase (352 aa).

Residues H24 and H26 each contribute to the Zn(2+) site. H26, D28, and G181 together coordinate substrate. Zn(2+) is bound at residue H208. E211 acts as the Proton donor in catalysis. Zn(2+) is bound at residue D290.

Belongs to the metallo-dependent hydrolases superfamily. Adenosine and AMP deaminases family. Adenosine deaminase subfamily. It depends on Zn(2+) as a cofactor.

The catalysed reaction is adenosine + H2O + H(+) = inosine + NH4(+). It catalyses the reaction 2'-deoxyadenosine + H2O + H(+) = 2'-deoxyinosine + NH4(+). In terms of biological role, catalyzes the hydrolytic deamination of adenosine and 2-deoxyadenosine. This is Adenosine deaminase from Lactococcus lactis subsp. lactis (strain IL1403) (Streptococcus lactis).